A 1489-amino-acid polypeptide reads, in one-letter code: Sex-determining transformer protein 2 (1489 aa).

The first 33 residues, 1 to 33 (MKLAFNKLLVASVVFTVLSFGLLLASLFTTTAT), serve as a signal peptide directing secretion. The next 11 helical transmembrane spans lie at 454–474 (MIYF…AFAF), 489–509 (GFIT…ILID), 513–533 (LCYI…VTFI), 600–620 (YWFL…FFID), 622–642 (DVQK…FEEM), 749–769 (AVVV…LLFI), 931–951 (IFAA…FSIG), 958–978 (LAFA…VSLF), 986–1006 (YTNV…CDLA), 1041–1061 (VQIF…TAII), and 1066–1086 (AFFI…FNSL). Residues 1138–1288 (EFSIRPTENT…EQQEVTDDVA (151 aa)) form an interaction with fem-3 region. 3 disordered regions span residues 1143–1176 (PTEN…DPSM), 1233–1393 (LLRQ…YPPS), and 1412–1489 (RNLP…TPGL). Basic and acidic residues-rich tracts occupy residues 1275–1298 (DPAK…EVRK), 1326–1340 (VSRE…REPR), and 1423–1433 (RPRDWDQRRLV). An MX regulatory domain; required for tra-1 binding region spans residues 1402–1423 (CEDVYWKYNERNLPDNVPMPPR). The segment covering 1444-1456 (VPPPGRSAIPIPP) has biased composition (pro residues). Residues 1460–1482 (RLRERRREQHLREQEARRNRPES) are compositionally biased toward basic and acidic residues.

As to quaternary structure, interacts with tra-1 and fem-3.

Its subcellular location is the membrane. Functionally, plays a major role in controlling sexual cell fates. Promotes female development in XX animals where it sequesters one or more of the FEM proteins to the membrane thereby freeing the tra-1 protein (a putative transcription factor) to enter the nucleus and promote female development. In XO animals it acts as a receptor for her-1 which prevents it from binding to FEM proteins thereby repressing the activity of tra-1. Negatively regulates male development when bound to fem-3 and is required together with tra-1 for promoting spermatogenesis. Also required for feminizing tra-3 activity. The protein is Sex-determining transformer protein 2 of Caenorhabditis briggsae.